The sequence spans 438 residues: uncharacterized protein (438 aa).

One can recognise an FAD-binding PCMH-type domain in the interval 23–193 (IHAKPPVVVV…VNATIRLTAA (171 aa)). FAD contacts are provided by residues 55–59 (VRGSG), 60–61 (HS), Gln65, Asp117, Thr122, 128–132 (SVGGF), Ile183, Tyr393, and 430–433 (APGY). His60 carries the pros-8alpha-FAD histidine modification.

It belongs to the oxygen-dependent FAD-linked oxidoreductase family. FAD serves as cofactor.

The FAS-operon encodes genes involved in cytokinin production and in host plant fasciation (leafy gall). This is an uncharacterized protein from Rhodococcoides fascians (Rhodococcus fascians).